Reading from the N-terminus, the 179-residue chain is Ferric nitrobindin-like protein (179 aa).

Positions 17-23 (GRWEGLG) match the GXWXGXG motif.

It belongs to the nitrobindin family.

In Thermobifida fusca (strain YX), this protein is Ferric nitrobindin-like protein.